The following is a 256-amino-acid chain: Capsid protein (256 aa).

A Bipartite nuclear localization signal motif is present at residues 3-20 (KRPADIIISTPGSKVRRR). The Nuclear localization signal motif lies at 40 to 54 (KRQSWTNRPINRKPR). A zinc finger lies at 68-85 (CEGPCKVQSFESRHDVVH). The short motif at 101 to 122 (LTHRVGKRFCVKSIYILGKIWM) is the Nuclear export signal element. The Bipartite nuclear localization signal motif lies at 200–247 (RRFFRVNNYVVYNQQEAGKYENHTENALMLYMACTHASNPVYATLKIR).

Belongs to the geminiviridae capsid protein family. As to quaternary structure, homomultimer. Binds to single-stranded and double-stranded viral DNA. Interacts (via nuclear localization signals) with host importin alpha-1a.

The protein localises to the virion. Its subcellular location is the host nucleus. Functionally, encapsidates the viral DNA into characteristic twinned ('geminate') particles. Binds the genomic viral ssDNA and shuttles it into and out of the cell nucleus. The CP of bipartite geminiviruses is not required for cell-to-cell or systemic movement. This Manihot esculenta (Cassava) protein is Capsid protein.